The primary structure comprises 256 residues: uncharacterized protein (256 aa).

Positions M1–G24 are cleaved as a signal peptide. The N-palmitoyl cysteine moiety is linked to residue C25. The S-diacylglycerol cysteine moiety is linked to residue C25.

Belongs to the staphylococcal tandem lipoprotein family.

The protein resides in the cell membrane. This is an uncharacterized protein from Staphylococcus aureus (strain MW2).